A 506-amino-acid chain; its full sequence is Histidine ammonia-lyase (506 aa).

Residues 143–145 (ASG) constitute a cross-link (5-imidazolinone (Ala-Gly)). At Ser-144 the chain carries 2,3-didehydroalanine (Ser).

It belongs to the PAL/histidase family. Post-translationally, contains an active site 4-methylidene-imidazol-5-one (MIO), which is formed autocatalytically by cyclization and dehydration of residues Ala-Ser-Gly.

Its subcellular location is the cytoplasm. The catalysed reaction is L-histidine = trans-urocanate + NH4(+). Its pathway is amino-acid degradation; L-histidine degradation into L-glutamate; N-formimidoyl-L-glutamate from L-histidine: step 1/3. This chain is Histidine ammonia-lyase, found in Salmonella paratyphi C (strain RKS4594).